Reading from the N-terminus, the 283-residue chain is 4-diphosphocytidyl-2-C-methyl-D-erythritol kinase (283 aa).

K12 is an active-site residue. 94-104 contributes to the ATP binding site; sequence PAQAGLGGGSS. D136 is a catalytic residue.

Belongs to the GHMP kinase family. IspE subfamily.

It carries out the reaction 4-CDP-2-C-methyl-D-erythritol + ATP = 4-CDP-2-C-methyl-D-erythritol 2-phosphate + ADP + H(+). Its pathway is isoprenoid biosynthesis; isopentenyl diphosphate biosynthesis via DXP pathway; isopentenyl diphosphate from 1-deoxy-D-xylulose 5-phosphate: step 3/6. In terms of biological role, catalyzes the phosphorylation of the position 2 hydroxy group of 4-diphosphocytidyl-2C-methyl-D-erythritol. This is 4-diphosphocytidyl-2-C-methyl-D-erythritol kinase from Acidovorax ebreus (strain TPSY) (Diaphorobacter sp. (strain TPSY)).